We begin with the raw amino-acid sequence, 180 residues long: Nudix hydrolase 16, mitochondrial (180 aa).

Residues 18–162 (GSRLVAGCIP…WMKDALVEGF (145 aa)) form the Nudix hydrolase domain. Substrate is bound at residue F60. Mn(2+)-binding residues include G63, E78, E82, and E144. The Nudix box motif lies at 63–84 (GGWENDETVREAAAREAVEEAG).

The protein belongs to the Nudix hydrolase family. Mg(2+) serves as cofactor. The cofactor is Mn(2+). In terms of tissue distribution, expressed in roots, leaves, stems and inflorescences.

The protein localises to the mitochondrion. Functionally, probably mediates the hydrolysis of some nucleoside diphosphate derivatives. The polypeptide is Nudix hydrolase 16, mitochondrial (NUDT16) (Arabidopsis thaliana (Mouse-ear cress)).